Reading from the N-terminus, the 167-residue chain is uncharacterized protein (167 aa).

This is an uncharacterized protein from Aquifex aeolicus (strain VF5).